The following is a 378-amino-acid chain: Schlafen family member 2 (378 aa).

It belongs to the Schlafen family. Mainly expressed in the thymus, lymph node and spleen.

Its subcellular location is the cytoplasm. Functionally, tRNA-binding protein involved in T-cell mediated immunity. Plays a key role during the metabolic reprograming phase of activated T-cell, when T-cells produce reactive oxygen species (ROS): acts by binding tRNAs and protecting them from cleavage by the oxidative stress-activated ribonuclease angiogenin (ANG). Also required for T-cell quiescence maintenance. The chain is Schlafen family member 2 from Mus musculus (Mouse).